We begin with the raw amino-acid sequence, 559 residues long: Formate--tetrahydrofolate ligase (559 aa).

68 to 75 (TPAGEGKT) contacts ATP.

This sequence belongs to the formate--tetrahydrofolate ligase family.

It catalyses the reaction (6S)-5,6,7,8-tetrahydrofolate + formate + ATP = (6R)-10-formyltetrahydrofolate + ADP + phosphate. It participates in one-carbon metabolism; tetrahydrofolate interconversion. This chain is Formate--tetrahydrofolate ligase, found in Rhizobium meliloti (strain 1021) (Ensifer meliloti).